The chain runs to 252 residues: Delta-like protein dsl-1 (252 aa).

The signal sequence occupies residues 1–17; it reads MLKYLIFLAILISVVHS. One can recognise a DSL domain in the interval 120–164; the sequence is IKCNRYWHGLHCDHFCNDDFARTINRRCTQNGTLGCLEGFHGPNC. Disulfide bonds link Cys122–Cys131, Cys135–Cys147, Cys155–Cys164, Cys173–Cys181, Cys175–Cys197, and Cys199–Cys209. One can recognise an EGF-like domain in the interval 169–210; the sequence is PADSCKCQNGGKCVSSLENTWAQNGSLICECRLGHFEGKHCE.

As to quaternary structure, may interact with lin-12/Notch receptor.

The protein resides in the secreted. Probable secreted Notch ligand involved in the mediation of Notch signaling. Involved in the lin-12/Notch pathway-mediated signaling of cell fate in vulval precursor cells (VPCs), acting redundantly with lag-2, apx-1 and osm-11. May also be involved in glp-1/Notch signaling. This is Delta-like protein dsl-1 from Caenorhabditis elegans.